Reading from the N-terminus, the 212-residue chain is Thymidylate kinase (212 aa).

An ATP-binding site is contributed by 10 to 17; that stretch reads GLEGAGKT.

It belongs to the thymidylate kinase family.

It catalyses the reaction dTMP + ATP = dTDP + ADP. Phosphorylation of dTMP to form dTDP in both de novo and salvage pathways of dTTP synthesis. The sequence is that of Thymidylate kinase from Yersinia pseudotuberculosis serotype O:1b (strain IP 31758).